Consider the following 204-residue polypeptide: Somatotropin (204 aa).

An N-terminal signal peptide occupies residues 1–17; sequence MDRVVLMLSVLSLGVSS. The residue at position 18 (Gln18) is a Pyrrolidone carboxylic acid. His36 provides a ligand contact to Zn(2+). Cys69 and Cys177 are joined by a disulfide. Glu186 contributes to the Zn(2+) binding site. The cysteines at positions 194 and 202 are disulfide-linked.

Belongs to the somatotropin/prolactin family.

The protein resides in the secreted. In terms of biological role, growth hormone plays an important role in growth control and is involved in the regulation of several anabolic processes. Implicated as an osmoregulatory substance important for seawater adaptation. The sequence is that of Somatotropin (gh) from Acanthopagrus latus (Yellowfin seabream).